A 495-amino-acid chain; its full sequence is UDP-N-acetylmuramoyl-L-alanyl-D-glutamate--2,6-diaminopimelate ligase (495 aa).

UDP-N-acetyl-alpha-D-muramoyl-L-alanyl-D-glutamate-binding positions include leucine 27, serine 29, and 44–46; that span reads HQA. Residue 116-122 participates in ATP binding; it reads GTNGKTT. Residues asparagine 157, 158–159, serine 185, glutamine 191, and arginine 193 contribute to the UDP-N-acetyl-alpha-D-muramoyl-L-alanyl-D-glutamate site; that span reads TT. At lysine 225 the chain carries N6-carboxylysine. Residues arginine 390, 414 to 417, glycine 465, and glutamate 469 each bind meso-2,6-diaminopimelate; that span reads DNPR. The short motif at 414 to 417 is the Meso-diaminopimelate recognition motif element; it reads DNPR.

This sequence belongs to the MurCDEF family. MurE subfamily. It depends on Mg(2+) as a cofactor. In terms of processing, carboxylation is probably crucial for Mg(2+) binding and, consequently, for the gamma-phosphate positioning of ATP.

The protein localises to the cytoplasm. The catalysed reaction is UDP-N-acetyl-alpha-D-muramoyl-L-alanyl-D-glutamate + meso-2,6-diaminopimelate + ATP = UDP-N-acetyl-alpha-D-muramoyl-L-alanyl-gamma-D-glutamyl-meso-2,6-diaminopimelate + ADP + phosphate + H(+). The protein operates within cell wall biogenesis; peptidoglycan biosynthesis. Its function is as follows. Catalyzes the addition of meso-diaminopimelic acid to the nucleotide precursor UDP-N-acetylmuramoyl-L-alanyl-D-glutamate (UMAG) in the biosynthesis of bacterial cell-wall peptidoglycan. In Escherichia coli O157:H7, this protein is UDP-N-acetylmuramoyl-L-alanyl-D-glutamate--2,6-diaminopimelate ligase.